A 536-amino-acid chain; its full sequence is Allene oxide synthase, chloroplastic (536 aa).

The transit peptide at 1–58 (MASSALNNLVAVNPNTLSPSPKSTPLPNTFSNLRRVSAFRPIKASLFGDSPIKIPGIT) directs the protein to the chloroplast. 3 residues coordinate heme b: lysine 151, histidine 182, and lysine 186. Serine 262, asparagine 339, and lysine 345 together coordinate (13S)-hydroperoxy-(9Z,11E)-octadecadienoate. (13S)-hydroperoxy-(9Z,11E,15Z)-octadecatrienoate is bound at residue asparagine 339. Positions 487 and 489 each coordinate heme b.

This sequence belongs to the cytochrome P450 family. It depends on heme b as a cofactor.

It is found in the plastid. Its subcellular location is the chloroplast. It carries out the reaction (13S)-hydroperoxy-(9Z,11E,15Z)-octadecatrienoate = (9Z,13S,15Z)-12,13-epoxyoctadeca-9,11,15-trienoate + H2O. It catalyses the reaction (13S)-hydroperoxy-(9Z,11E)-octadecadienoate = (9Z,13S)-12,13-epoxyoctadeca-9,11-dienoate + H2O. The protein operates within lipid metabolism; oxylipin biosynthesis. In terms of biological role, cytochrome P450 enzyme involved in the biosynthesis of oxylipin jasmonates, important phytohormones acting as growth regulators and signaling molecules for plant defense. Functions as an allene oxide synthase that converts hydroperoxy fatty acids to unstable allene epoxides. Catalyzes the dehydration of 13-HPOTE ((13S)-hydroperoxy-(9Z,11E,15Z)-octadecatrienoate), as well as 13-HPODE ((13S)-hydroperoxy-(9Z,11E)-octadecadienoate). The protein is Allene oxide synthase, chloroplastic (CYP74A) of Linum usitatissimum (Flax).